Consider the following 218-residue polypeptide: Pyridoxine/pyridoxamine 5'-phosphate oxidase (218 aa).

Residues 14–17 (RREY) and Lys-72 each bind substrate. Residues 67–72 (RIVLLK), 82–83 (YT), Arg-88, Lys-89, and Gln-111 contribute to the FMN site. Residues Tyr-129, Arg-133, and Ser-137 each contribute to the substrate site. FMN is bound by residues 146–147 (QS) and Trp-191. Residue 197-199 (RLH) participates in substrate binding. Arg-201 lines the FMN pocket.

It belongs to the pyridoxamine 5'-phosphate oxidase family. Homodimer. The cofactor is FMN.

The catalysed reaction is pyridoxamine 5'-phosphate + O2 + H2O = pyridoxal 5'-phosphate + H2O2 + NH4(+). The enzyme catalyses pyridoxine 5'-phosphate + O2 = pyridoxal 5'-phosphate + H2O2. It functions in the pathway cofactor metabolism; pyridoxal 5'-phosphate salvage; pyridoxal 5'-phosphate from pyridoxamine 5'-phosphate: step 1/1. It participates in cofactor metabolism; pyridoxal 5'-phosphate salvage; pyridoxal 5'-phosphate from pyridoxine 5'-phosphate: step 1/1. Its function is as follows. Catalyzes the oxidation of either pyridoxine 5'-phosphate (PNP) or pyridoxamine 5'-phosphate (PMP) into pyridoxal 5'-phosphate (PLP). In Escherichia coli O45:K1 (strain S88 / ExPEC), this protein is Pyridoxine/pyridoxamine 5'-phosphate oxidase.